The chain runs to 180 residues: Ribulose bisphosphate carboxylase small subunit, chloroplastic (180 aa).

Residues 1 to 56 constitute a chloroplast transit peptide; sequence MASSVLSSAAVATRSNVAQANMVAPFTGLKSAASFPVSRKQNLDITSIASNGGRVQ.

It belongs to the RuBisCO small chain family. In terms of assembly, heterohexadecamer of 8 large and 8 small subunits. As to quaternary structure, (Microbial infection) Binds to tobamovirus movement protein at the plasmodesmata (e.g. tomato mosaic virus MP AC P69513); this interaction seems required for viral systemic movement.

The protein resides in the plastid. It is found in the chloroplast. Its subcellular location is the cell junction. The protein localises to the plasmodesma. RuBisCO catalyzes two reactions: the carboxylation of D-ribulose 1,5-bisphosphate, the primary event in carbon dioxide fixation, as well as the oxidative fragmentation of the pentose substrate. Both reactions occur simultaneously and in competition at the same active site. Although the small subunit is not catalytic it is essential for maximal activity. Involved in antiviral defenses. In terms of biological role, (Microbial infection) Required for tobamovirus movement (e.g. tobacco mosaic virus (TMV)). The chain is Ribulose bisphosphate carboxylase small subunit, chloroplastic from Nicotiana benthamiana.